A 263-amino-acid chain; its full sequence is Endonuclease 8 (263 aa).

Residue P2 is the Schiff-base intermediate with DNA of the active site. E3 functions as the Proton donor in the catalytic mechanism. K53 (proton donor; for beta-elimination activity) is an active-site residue. The DNA site is built by Q70, R125, and N169. An FPG-type zinc finger spans residues K229–K263. Catalysis depends on R253, which acts as the Proton donor; for delta-elimination activity.

Belongs to the FPG family. Zn(2+) serves as cofactor.

The enzyme catalyses 2'-deoxyribonucleotide-(2'-deoxyribose 5'-phosphate)-2'-deoxyribonucleotide-DNA = a 3'-end 2'-deoxyribonucleotide-(2,3-dehydro-2,3-deoxyribose 5'-phosphate)-DNA + a 5'-end 5'-phospho-2'-deoxyribonucleoside-DNA + H(+). Involved in base excision repair of DNA damaged by oxidation or by mutagenic agents. Acts as a DNA glycosylase that recognizes and removes damaged bases. Has a preference for oxidized pyrimidines, such as thymine glycol, 5,6-dihydrouracil and 5,6-dihydrothymine. Has AP (apurinic/apyrimidinic) lyase activity and introduces nicks in the DNA strand. Cleaves the DNA backbone by beta-delta elimination to generate a single-strand break at the site of the removed base with both 3'- and 5'-phosphates. This is Endonuclease 8 from Salmonella schwarzengrund (strain CVM19633).